Consider the following 343-residue polypeptide: MKNLLDLSYDELVSEITSLGLERYRADQILDWVFDKKVNNFDEMTNLSKQHRALLKEHFTIPFLKLLEKRVSKIDGTTKFLWELEDGNTIESVMIFHPGRITACISTQVGCPVGCTFCATGMSGFVRNLTTGEIVSQILSMEKEEGKKIGNVVYMGMGEPLLNYENTIKSIRILNHKKMGNIGIRRITISTVGIPEKIIQLADEGLDVKLALSLHAPTNFKRDQLVPLNRKYSVEEILNAIKVYQMKTGKRVTIEYVLIRGVNDEISDAKKLAEILKGLKVFVNLIPVNPTVAGLSKPSRQRILAFKRILLENGIEAEIRQEKGSDIEAACGQLRLKRKVSSP.

Glu91 serves as the catalytic Proton acceptor. One can recognise a Radical SAM core domain in the interval 97–326; it reads HPGRITACIS…AEIRQEKGSD (230 aa). Cysteines 104 and 331 form a disulfide. The [4Fe-4S] cluster site is built by Cys111, Cys115, and Cys118. S-adenosyl-L-methionine contacts are provided by residues 158-159, Ser190, 213-215, and Asn289; these read GE and SLH. The active-site S-methylcysteine intermediate is Cys331.

The protein belongs to the radical SAM superfamily. RlmN family. The cofactor is [4Fe-4S] cluster.

It localises to the cytoplasm. It catalyses the reaction adenosine(2503) in 23S rRNA + 2 reduced [2Fe-2S]-[ferredoxin] + 2 S-adenosyl-L-methionine = 2-methyladenosine(2503) in 23S rRNA + 5'-deoxyadenosine + L-methionine + 2 oxidized [2Fe-2S]-[ferredoxin] + S-adenosyl-L-homocysteine. The enzyme catalyses adenosine(37) in tRNA + 2 reduced [2Fe-2S]-[ferredoxin] + 2 S-adenosyl-L-methionine = 2-methyladenosine(37) in tRNA + 5'-deoxyadenosine + L-methionine + 2 oxidized [2Fe-2S]-[ferredoxin] + S-adenosyl-L-homocysteine. Functionally, specifically methylates position 2 of adenine 2503 in 23S rRNA and position 2 of adenine 37 in tRNAs. The protein is Probable dual-specificity RNA methyltransferase RlmN of Thermotoga neapolitana (strain ATCC 49049 / DSM 4359 / NBRC 107923 / NS-E).